The sequence spans 451 residues: 3-carboxy-cis,cis-muconate cycloisomerase (451 aa).

Belongs to the class-II fumarase/aspartase family. In terms of assembly, homotetramer.

The enzyme catalyses 2-(carboxymethyl)-5-oxo-2,5-dihydro-2-furoate = 3-carboxy-cis,cis-muconate + H(+). It functions in the pathway aromatic compound metabolism; beta-ketoadipate pathway; 5-oxo-4,5-dihydro-2-furylacetate from 3-carboxy-cis,cis-muconate: step 1/2. Functionally, catalyzes an anti cycloisomerization. The chain is 3-carboxy-cis,cis-muconate cycloisomerase (pcaB) from Acinetobacter baylyi (strain ATCC 33305 / BD413 / ADP1).